The sequence spans 69 residues: DNA-directed RNA polymerase subunit epsilon (69 aa).

The protein belongs to the RNA polymerase subunit epsilon family. As to quaternary structure, RNAP is composed of a core of 2 alpha, a beta and a beta' subunit. The core is associated with a delta subunit, and at least one of epsilon or omega. When a sigma factor is associated with the core the holoenzyme is formed, which can initiate transcription.

The enzyme catalyses RNA(n) + a ribonucleoside 5'-triphosphate = RNA(n+1) + diphosphate. Its function is as follows. A non-essential component of RNA polymerase (RNAP). The polypeptide is DNA-directed RNA polymerase subunit epsilon (Shouchella clausii (strain KSM-K16) (Alkalihalobacillus clausii)).